Consider the following 1753-residue polypeptide: Negative regulator of sporulation PMD1 (1753 aa).

Kelch repeat units follow at residues 143–198 (NIYI…VLNE) and 206–253 (KLII…KILV). Phosphothreonine is present on Thr-298. Over residues 651-664 (TTKFGNSSQSSNGS) the composition is skewed to polar residues. Disordered regions lie at residues 651 to 753 (TTKF…TTCS) and 771 to 807 (LGLS…CTLS). Positions 670-683 (SKNGNSKSNSNTSL) are enriched in low complexity. 4 stretches are compositionally biased toward polar residues: residues 690–699 (DFTSSTSSPK), 740–753 (TGTS…TTCS), 774–783 (SEQSGRSTRA), and 797–807 (NDGNDSNCTLS). Ser-838 carries the post-translational modification Phosphoserine. 3 disordered regions span residues 875–915 (IASP…LGSS), 938–957 (PLEP…SSLA), and 962–988 (FGRD…ARRI). Positions 880–900 (QSRQTSFASTASTASVVSSTS) are enriched in low complexity. Over residues 938 to 947 (PLEPLPPVPK) the composition is skewed to pro residues. The segment covering 979–988 (KSSSSDARRI) has biased composition (low complexity). Phosphoserine is present on residues Ser-1289, Ser-1307, and Ser-1356. Disordered regions lie at residues 1312–1467 (SPAT…DLDS), 1604–1686 (PIFA…NKRF), and 1706–1753 (SAVN…GKRR). The span at 1344–1379 (VSRQQNFPRRSSSFTETVPTEPTRYNYQNLDSSKSN) shows a compositional bias: polar residues. Basic and acidic residues predominate over residues 1399-1430 (NFDKYKVETLQKRNSNDGKDLDRTNDPLKNRG). Over residues 1653–1677 (IKFSQAPSTQISPRTSVTDFTASQQ) the composition is skewed to polar residues. Ser-1664 carries the post-translational modification Phosphoserine. The span at 1711–1723 (GRKESEGHCEDRS) shows a compositional bias: basic and acidic residues.

It localises to the cytoplasm. Its function is as follows. Negatively regulates early sporulation-specific genes. Seems to exert its function by positively regulating the Ras/cAMP pathway. Required for growth under alkaline conditions. Acts synergetically with MDS3. This is Negative regulator of sporulation PMD1 (PMD1) from Saccharomyces cerevisiae (strain ATCC 204508 / S288c) (Baker's yeast).